We begin with the raw amino-acid sequence, 244 residues long: tRNA pseudouridine synthase A (244 aa).

Aspartate 52 serves as the catalytic Nucleophile. Position 110 (tyrosine 110) interacts with substrate.

Belongs to the tRNA pseudouridine synthase TruA family. Homodimer.

It catalyses the reaction uridine(38/39/40) in tRNA = pseudouridine(38/39/40) in tRNA. Formation of pseudouridine at positions 38, 39 and 40 in the anticodon stem and loop of transfer RNAs. The protein is tRNA pseudouridine synthase A of Geobacter sulfurreducens (strain ATCC 51573 / DSM 12127 / PCA).